A 646-amino-acid chain; its full sequence is A-kinase anchor protein 8-like (646 aa).

The interval 1-268 (MSYTGFVQGS…MRRTWKTWTT (268 aa)) is sufficient for activation of CTE-mediated expression. Arg208 bears the Asymmetric dimethylarginine; alternate mark. Arg208 is subject to Omega-N-methylarginine; alternate. Residues Arg217, Arg237, and Arg247 each carry the omega-N-methylarginine modification. At Lys257 the chain carries N6-acetyllysine. A disordered region spans residues 264–381 (KTWTTADFRT…QDKQKKRQRD (118 aa)). Position 267 is a phosphothreonine (Thr267). The Nuclear localization signal signature appears at 274 to 279 (KKKKRK). A Nuclear export signal (NES) motif is present at residues 280–296 (QGGSPDEPDSKATRTDC). Residue Ser283 is modified to Phosphoserine. The span at 287 to 296 (PDSKATRTDC) shows a compositional bias: basic and acidic residues. Residue Thr292 is modified to Phosphothreonine. Ser297 carries the post-translational modification Phosphoserine. Acidic residues predominate over residues 298 to 314 (DNSDSDNDEGTEGEATE). The segment covering 337–349 (EDGREEGKEDPEK) has biased composition (basic and acidic residues). The short motif at 362–364 (KRK) is the Nuclear localization signal element. 2 C2H2 AKAP95-type zinc fingers span residues 391–413 (CSLC…SKFH) and 484–507 (CAAC…TMDH). The disordered stretch occupies residues 545–646 (GENPFTDSPE…DDEEGGGGAP (102 aa)). At Ser552 the chain carries Phosphoserine. Residues 552–563 (SPEEEKEQEEAE) show a composition bias toward acidic residues. Over residues 564–586 (GGALDEGAQGEAAGISEGAEGVP) the composition is skewed to low complexity. Residues 587-607 (AQPPVPPEPAPGAVSPPPPPP) are compositionally biased toward pro residues. A compositionally biased stretch (acidic residues) spans 634-646 (DVEDDEEGGGGAP).

The protein belongs to the AKAP95 family. As to quaternary structure, interacts (via N-terminus) with DHX9 (via RGG region). Interacts with TMPO isoform Beta, PRPF40A, RNF43, lamin-B. Interacts with HDAC3; increased during mitosis. Interacts with EBV EBNA-LP. Interacts with HIV-1 reverse transcriptase/ribonuclease H. Post-translationally, phosphorylated on serine or threonine residues possibly by PKA; probably modulating the interaction with TMPO isoform Beta. In terms of tissue distribution, ubiquitously expressed. Expressed in the brain cortex (at protein level).

The protein resides in the nucleus. The protein localises to the nucleus matrix. It is found in the nucleus speckle. Its subcellular location is the PML body. It localises to the cytoplasm. Could play a role in constitutive transport element (CTE)-mediated gene expression by association with DHX9. Increases CTE-dependent nuclear unspliced mRNA export. Proposed to target PRKACA to the nucleus but does not seem to be implicated in the binding of regulatory subunit II of PKA. May be involved in nuclear envelope breakdown and chromatin condensation. May be involved in anchoring nuclear membranes to chromatin in interphase and in releasing membranes from chromating at mitosis. May regulate the initiation phase of DNA replication when associated with TMPO isoform Beta. Required for cell cycle G2/M transition and histone deacetylation during mitosis. In mitotic cells recruits HDAC3 to the vicinity of chromatin leading to deacetylation and subsequent phosphorylation at 'Ser-10' of histone H3; in this function seems to act redundantly with AKAP8. May be involved in regulation of pre-mRNA splicing. Its function is as follows. (Microbial infection) In case of EBV infection, may target PRKACA to EBNA-LP-containing nuclear sites to modulate transcription from specific promoters. In terms of biological role, (Microbial infection) Can synergize with DHX9 to activate the CTE-mediated gene expression of type D retroviruses. Functionally, (Microbial infection) In case of HIV-1 infection, involved in the DHX9-promoted annealing of host tRNA(Lys3) to viral genomic RNA as a primer in reverse transcription; in vitro negatively regulates DHX9 annealing activity. The protein is A-kinase anchor protein 8-like (AKAP8L) of Homo sapiens (Human).